Consider the following 64-residue polypeptide: uncharacterized protein (64 aa).

Over residues Met1–His14 the composition is skewed to polar residues. The interval Met1–Pro42 is disordered.

This is an uncharacterized protein from Dictyostelium discoideum (Social amoeba).